A 506-amino-acid chain; its full sequence is Histidine ammonia-lyase (506 aa).

Residues 143 to 145 (ASG) constitute a cross-link (5-imidazolinone (Ala-Gly)). Residue S144 is modified to 2,3-didehydroalanine (Ser).

This sequence belongs to the PAL/histidase family. Post-translationally, contains an active site 4-methylidene-imidazol-5-one (MIO), which is formed autocatalytically by cyclization and dehydration of residues Ala-Ser-Gly.

Its subcellular location is the cytoplasm. The enzyme catalyses L-histidine = trans-urocanate + NH4(+). It participates in amino-acid degradation; L-histidine degradation into L-glutamate; N-formimidoyl-L-glutamate from L-histidine: step 1/3. The sequence is that of Histidine ammonia-lyase from Salmonella schwarzengrund (strain CVM19633).